Consider the following 587-residue polypeptide: Phosphomethylpyrimidine synthase (587 aa).

Substrate is bound by residues Asn218, Met247, Tyr276, His312, 332-334 (SRG), 373-376 (DGLR), and Glu412. His416 is a binding site for Zn(2+). Residue Tyr439 participates in substrate binding. His480 provides a ligand contact to Zn(2+). Positions 560, 563, and 568 each coordinate [4Fe-4S] cluster.

The protein belongs to the ThiC family. The cofactor is [4Fe-4S] cluster.

The catalysed reaction is 5-amino-1-(5-phospho-beta-D-ribosyl)imidazole + S-adenosyl-L-methionine = 4-amino-2-methyl-5-(phosphooxymethyl)pyrimidine + CO + 5'-deoxyadenosine + formate + L-methionine + 3 H(+). It functions in the pathway cofactor biosynthesis; thiamine diphosphate biosynthesis. Its function is as follows. Catalyzes the synthesis of the hydroxymethylpyrimidine phosphate (HMP-P) moiety of thiamine from aminoimidazole ribotide (AIR) in a radical S-adenosyl-L-methionine (SAM)-dependent reaction. This is Phosphomethylpyrimidine synthase from Porphyromonas gingivalis (strain ATCC 33277 / DSM 20709 / CIP 103683 / JCM 12257 / NCTC 11834 / 2561).